The sequence spans 134 residues: Acyl carrier protein, chloroplastic (134 aa).

The N-terminal 51 residues, 1–51 (MATTFSASVSMQATSLATTTRISFQKPVLVSNHGRTNLSFNLSRTRLSISC), are a transit peptide targeting the chloroplast. A Carrier domain is found at 55 to 130 (QETVEKVSEI…QAAELIEELM (76 aa)). S90 bears the O-(pantetheine 4'-phosphoryl)serine mark.

This sequence belongs to the acyl carrier protein (ACP) family. In terms of processing, 4'-phosphopantetheine is transferred from CoA to a specific serine of apo-ACP by acpS. This modification is essential for activity because fatty acids are bound in thioester linkage to the sulfhydryl of the prosthetic group. In terms of tissue distribution, seed.

Its subcellular location is the plastid. It is found in the chloroplast. It functions in the pathway lipid metabolism; fatty acid biosynthesis. Carrier of the growing fatty acid chain in fatty acid biosynthesis. The chain is Acyl carrier protein, chloroplastic (ACL1.C1) from Brassica napus (Rape).